Reading from the N-terminus, the 37-residue chain is Cytochrome b6-f complex subunit 5 (37 aa).

A helical transmembrane segment spans residues 5–25; sequence LLCGIVLGLVPVTIAGLFVTA.

This sequence belongs to the PetG family. In terms of assembly, the 4 large subunits of the cytochrome b6-f complex are cytochrome b6, subunit IV (17 kDa polypeptide, PetD), cytochrome f and the Rieske protein, while the 4 small subunits are PetG, PetL, PetM and PetN. The complex functions as a dimer.

The protein resides in the plastid. Its subcellular location is the chloroplast thylakoid membrane. Its function is as follows. Component of the cytochrome b6-f complex, which mediates electron transfer between photosystem II (PSII) and photosystem I (PSI), cyclic electron flow around PSI, and state transitions. PetG is required for either the stability or assembly of the cytochrome b6-f complex. The sequence is that of Cytochrome b6-f complex subunit 5 from Chlamydomonas reinhardtii (Chlamydomonas smithii).